Here is an 883-residue protein sequence, read N- to C-terminus: Collagen, type I, alpha 1b (883 aa).

The disordered stretch occupies residues 1–883; that stretch reads QMSYVDHSKS…LGGSNDVELR (883 aa). A compositionally biased stretch (pro residues) spans 13–33; the sequence is PPQPGPMGPMGPRGPPGPPGS. Composition is skewed to low complexity over residues 34–57, 113–122, and 129–140; these read SGPQ…AMGS, VPGVMGARGR, and SGARGNDGNTGP. Composition is skewed to gly residues over residues 147-161 and 185-194; these read TGGE…GNEG and GTDGGPGAKG. Composition is skewed to low complexity over residues 195-205, 214-223, and 230-248; these read SPGAAGLAGAP, AQGAVGAPGP, and PGAS…PGPA. Positions 285 to 297 are enriched in gly residues; it reads GADGGAGGKGAPG. 2 stretches are compositionally biased toward low complexity: residues 310–326 and 390–402; these read ATGE…PGSK and VGAP…AGPA. The segment covering 415 to 424 has biased composition (gly residues); sequence GAPGLGGPTG. Residues 425-444 show a composition bias toward low complexity; that stretch reads ARGAPGPAGNDGAKGEPGAA. Composition is skewed to gly residues over residues 445–454 and 478–487; these read GAPGGLGAPG and GGKGGDGAPG. Residues 512-542 show a composition bias toward low complexity; sequence AGPTGPRGETGPPGPAGFAGPPGADGQPGAK. The span at 564–573 shows a compositional bias: gly residues; sequence GPKGGAGPPG. Low complexity-rich tracts occupy residues 574-584, 717-726, and 742-756; these read ATGFPGPAGRV, APGAVGPSGK, and SGPA…PAGA. Residues 757-771 are compositionally biased toward basic and acidic residues; that stretch reads KGDRGEAGEAGDRGH. A compositionally biased stretch (low complexity) spans 792–812; the sequence is PAGASGPAGPRGPAGSNGAPG. A compositionally biased stretch (pro residues) spans 821–836; it reads AGPPGPPGPAGPPGPP.

This sequence belongs to the fibrillar collagen family.

This chain is Collagen, type I, alpha 1b, found in Epinephelus costae (Goldblotch grouper).